A 450-amino-acid chain; its full sequence is MRTLMSATKNNVYSVSQLNSEVRHILEGQIGKIWLNGEISNFSAPSSGHWYLTLKDAHSQVRCAMFKGRNQSVRFKPVNGQQVLIKGAISVYEPRGDYQLLLESMLPAGDGLLAQEFEALKLKLAAEGLFALETKRPIPTNIQRIGVITSATGAALRDILHVLARRDPSIEVVVYPTQVQGATASQLICQAIVTANQRMEVDVLLLTRGGGSLEDLWCFNSEHLAHAIYNSALPVVSAVGHEIDTTISDYVADVRAPTPSAGAELLSKDKGNKAEKLALLLSRLQQGMKHYQLQQYGRLTQLSHQLQRHEPQHKLQQFEQRFDEIQMRLENALQHKLSRLTLRHQQLHNRLQQRSPVNTLTLEKQRLGYLIERFNDASKDYFKQAESRVSQAAHNLDTVSPLATLSRGYSITSTNEHVIENANQLSNGDVIHTRLKQGSVTSTVTDVSTK.

It belongs to the XseA family. In terms of assembly, heterooligomer composed of large and small subunits.

The protein resides in the cytoplasm. It catalyses the reaction Exonucleolytic cleavage in either 5'- to 3'- or 3'- to 5'-direction to yield nucleoside 5'-phosphates.. Bidirectionally degrades single-stranded DNA into large acid-insoluble oligonucleotides, which are then degraded further into small acid-soluble oligonucleotides. The polypeptide is Exodeoxyribonuclease 7 large subunit (Shewanella frigidimarina (strain NCIMB 400)).